The sequence spans 369 residues: Peptide chain release factor 2 (369 aa).

The residue at position 251 (Gln251) is an N5-methylglutamine.

It belongs to the prokaryotic/mitochondrial release factor family. In terms of processing, methylated by PrmC. Methylation increases the termination efficiency of RF2.

The protein resides in the cytoplasm. Peptide chain release factor 2 directs the termination of translation in response to the peptide chain termination codons UGA and UAA. This Acidothermus cellulolyticus (strain ATCC 43068 / DSM 8971 / 11B) protein is Peptide chain release factor 2.